The following is a 299-amino-acid chain: tRNA dimethylallyltransferase (299 aa).

11 to 18 (GPTAVGKT) is an ATP binding site. 13-18 (TAVGKT) contacts substrate. The tract at residues 36–39 (DSQQ) is interaction with substrate tRNA.

This sequence belongs to the IPP transferase family. In terms of assembly, monomer. It depends on Mg(2+) as a cofactor.

The catalysed reaction is adenosine(37) in tRNA + dimethylallyl diphosphate = N(6)-dimethylallyladenosine(37) in tRNA + diphosphate. In terms of biological role, catalyzes the transfer of a dimethylallyl group onto the adenine at position 37 in tRNAs that read codons beginning with uridine, leading to the formation of N6-(dimethylallyl)adenosine (i(6)A). The sequence is that of tRNA dimethylallyltransferase from Streptococcus pyogenes serotype M28 (strain MGAS6180).